Consider the following 199-residue polypeptide: Cytochrome c oxidase assembly protein CtaG (199 aa).

Residues 1–12 (MTNTPQTPPKER) lie on the Cytoplasmic side of the membrane. Residues 13–35 (ANGVIVGACLAFVAGMVGMAYAA) form a helical; Signal-anchor for type II membrane protein membrane-spanning segment. Residues 36 to 199 (VPLYDMFCRV…VKDGETENRL (164 aa)) are Periplasmic-facing.

This sequence belongs to the COX11/CtaG family.

The protein localises to the cell inner membrane. Functionally, exerts its effect at some terminal stage of cytochrome c oxidase synthesis, probably by being involved in the insertion of the copper B into subunit I. This is Cytochrome c oxidase assembly protein CtaG from Sinorhizobium fredii (strain NBRC 101917 / NGR234).